A 210-amino-acid polypeptide reads, in one-letter code: Na(+)-translocating NADH-quinone reductase subunit D (210 aa).

The next 5 helical transmembrane spans lie at 42–62 (FVMTLAVTFVTALSNFFVSVI), 72–92 (IIVQMAIIASLVIVVDQILKA), 103–123 (VFVGLIITNCIVMGRAEAFAM), 131–151 (LIDGIGNGLGYGFVLITVGFF), and 178–198 (NGLMLLAPSAFFLIGFMIWAI).

This sequence belongs to the NqrDE/RnfAE family. As to quaternary structure, composed of six subunits; NqrA, NqrB, NqrC, NqrD, NqrE and NqrF.

Its subcellular location is the cell inner membrane. The enzyme catalyses a ubiquinone + n Na(+)(in) + NADH + H(+) = a ubiquinol + n Na(+)(out) + NAD(+). Its function is as follows. NQR complex catalyzes the reduction of ubiquinone-1 to ubiquinol by two successive reactions, coupled with the transport of Na(+) ions from the cytoplasm to the periplasm. NqrA to NqrE are probably involved in the second step, the conversion of ubisemiquinone to ubiquinol. The polypeptide is Na(+)-translocating NADH-quinone reductase subunit D (Vibrio vulnificus (strain YJ016)).